Here is a 185-residue protein sequence, read N- to C-terminus: Ribosome-recycling factor (185 aa).

Belongs to the RRF family.

It is found in the cytoplasm. In terms of biological role, responsible for the release of ribosomes from messenger RNA at the termination of protein biosynthesis. May increase the efficiency of translation by recycling ribosomes from one round of translation to another. The polypeptide is Ribosome-recycling factor (Clostridium acetobutylicum (strain ATCC 824 / DSM 792 / JCM 1419 / IAM 19013 / LMG 5710 / NBRC 13948 / NRRL B-527 / VKM B-1787 / 2291 / W)).